Reading from the N-terminus, the 396-residue chain is Argininosuccinate synthase (396 aa).

Ala-9–Ser-17 is an ATP binding site. Tyr-85 contributes to the L-citrulline binding site. Gly-115 contributes to the ATP binding site. Thr-117, Asn-121, and Asp-122 together coordinate L-aspartate. Position 121 (Asn-121) interacts with L-citrulline. 4 residues coordinate L-citrulline: Arg-125, Ser-173, Glu-258, and Tyr-270.

The protein belongs to the argininosuccinate synthase family. Type 1 subfamily. As to quaternary structure, homotetramer.

Its subcellular location is the cytoplasm. It carries out the reaction L-citrulline + L-aspartate + ATP = 2-(N(omega)-L-arginino)succinate + AMP + diphosphate + H(+). It participates in amino-acid biosynthesis; L-arginine biosynthesis; L-arginine from L-ornithine and carbamoyl phosphate: step 2/3. In Streptococcus agalactiae serotype V (strain ATCC BAA-611 / 2603 V/R), this protein is Argininosuccinate synthase.